Reading from the N-terminus, the 295-residue chain is SPX domain-containing protein 1 (295 aa).

Residues 1 to 166 enclose the SPX domain; it reads MKFGKSLSSQ…GALIRLPFIQ (166 aa). A disordered region spans residues 199 to 227; that stretch reads LSVSSEDGRGDSTNEDKPSNPSSSLVNGG. Residues 204–216 are compositionally biased toward basic and acidic residues; it reads EDGRGDSTNEDKP.

In terms of assembly, interacts (via SPX domain) with PHR2 (via C-terminus). Interacts with RLI1 in the nucleus to prevents its positive regulation of leaf inclination during phosphate (Pi) starvation. Predominantly expressed in roots and leaves. Localized in leaves lamina joints.

It localises to the nucleus. Involved in plant adaptation to phosphate (Pi) starvation. Inhibits PHR2 DNA-binding activity via a Pi-dependent protein interaction. Suppresses the regulation on expression of PT2 by PHR2 and accumulation of shoot Pi. Optimizes growth under phosphate-limited conditions through a negative feedback loop of the PSI (phosphate starvation-induced) signaling pathway. Regulates the expression of SPX2, SPX3 and SPX5. May be an important link between signal transduction pathways related to phosphate starvation and cold stress. Together with SPX2, plays a negative role in the regulation of leaf inclination by preventing RLI1 transcription factor activity in Pi depleted conditions. The sequence is that of SPX domain-containing protein 1 from Oryza sativa subsp. japonica (Rice).